The sequence spans 309 residues: tRNA pseudouridine synthase B (309 aa).

The active-site Nucleophile is the D52.

The protein belongs to the pseudouridine synthase TruB family. Type 1 subfamily.

The enzyme catalyses uridine(55) in tRNA = pseudouridine(55) in tRNA. Functionally, responsible for synthesis of pseudouridine from uracil-55 in the psi GC loop of transfer RNAs. This Leptospira interrogans serogroup Icterohaemorrhagiae serovar Lai (strain 56601) protein is tRNA pseudouridine synthase B.